A 100-amino-acid polypeptide reads, in one-letter code: Co-chaperonin GroES (100 aa).

This sequence belongs to the GroES chaperonin family. In terms of assembly, heptamer of 7 subunits arranged in a ring. Interacts with the chaperonin GroEL.

The protein resides in the cytoplasm. Together with the chaperonin GroEL, plays an essential role in assisting protein folding. The GroEL-GroES system forms a nano-cage that allows encapsulation of the non-native substrate proteins and provides a physical environment optimized to promote and accelerate protein folding. GroES binds to the apical surface of the GroEL ring, thereby capping the opening of the GroEL channel. The chain is Co-chaperonin GroES from Mycolicibacterium paratuberculosis (strain ATCC BAA-968 / K-10) (Mycobacterium paratuberculosis).